A 136-amino-acid polypeptide reads, in one-letter code: S-protein homolog 17 (136 aa).

The N-terminal stretch at 1–22 (MKNLSIFMFVFSLCMFGHVSRA) is a signal peptide.

It belongs to the plant self-incompatibility (S1) protein family.

Its subcellular location is the secreted. This Arabidopsis thaliana (Mouse-ear cress) protein is S-protein homolog 17.